We begin with the raw amino-acid sequence, 70 residues long: MPVKKGEMVRAIREKLENSVEAKASDTRFPAYLFETKGEVVDIKGDYALVMFGQVPTPNIWLRLDQIESF.

It belongs to the complex I NdhO subunit family. NDH-1 can be composed of about 15 different subunits; different subcomplexes with different compositions have been identified which probably have different functions.

The protein localises to the cellular thylakoid membrane. The catalysed reaction is a plastoquinone + NADH + (n+1) H(+)(in) = a plastoquinol + NAD(+) + n H(+)(out). It carries out the reaction a plastoquinone + NADPH + (n+1) H(+)(in) = a plastoquinol + NADP(+) + n H(+)(out). Its function is as follows. NDH-1 shuttles electrons from an unknown electron donor, via FMN and iron-sulfur (Fe-S) centers, to quinones in the respiratory and/or the photosynthetic chain. The immediate electron acceptor for the enzyme in this species is believed to be plastoquinone. Couples the redox reaction to proton translocation, and thus conserves the redox energy in a proton gradient. Cyanobacterial NDH-1 also plays a role in inorganic carbon-concentration. The protein is NAD(P)H-quinone oxidoreductase subunit O of Nostoc sp. (strain PCC 7120 / SAG 25.82 / UTEX 2576).